Consider the following 393-residue polypeptide: Acetyl-CoA acetyltransferase (393 aa).

Cys88 acts as the Acyl-thioester intermediate in catalysis. Residues His349 and Cys379 each act as proton acceptor in the active site.

This sequence belongs to the thiolase-like superfamily. Thiolase family.

The protein localises to the cytoplasm. It catalyses the reaction 2 acetyl-CoA = acetoacetyl-CoA + CoA. It participates in metabolic intermediate biosynthesis; (R)-mevalonate biosynthesis; (R)-mevalonate from acetyl-CoA: step 1/3. This Pseudomonas aeruginosa (strain ATCC 15692 / DSM 22644 / CIP 104116 / JCM 14847 / LMG 12228 / 1C / PRS 101 / PAO1) protein is Acetyl-CoA acetyltransferase (atoB).